The chain runs to 467 residues: Asparagine--tRNA ligase (467 aa).

Belongs to the class-II aminoacyl-tRNA synthetase family. In terms of assembly, homodimer.

It localises to the cytoplasm. It catalyses the reaction tRNA(Asn) + L-asparagine + ATP = L-asparaginyl-tRNA(Asn) + AMP + diphosphate + H(+). In Haemophilus influenzae (strain PittGG), this protein is Asparagine--tRNA ligase.